Consider the following 150-residue polypeptide: Nucleoside diphosphate kinase (150 aa).

Residues K9, F57, R85, T91, R102, and N112 each coordinate ATP. H115 functions as the Pros-phosphohistidine intermediate in the catalytic mechanism.

Belongs to the NDK family. Mg(2+) serves as cofactor.

It is found in the cytoplasm. The catalysed reaction is a 2'-deoxyribonucleoside 5'-diphosphate + ATP = a 2'-deoxyribonucleoside 5'-triphosphate + ADP. The enzyme catalyses a ribonucleoside 5'-diphosphate + ATP = a ribonucleoside 5'-triphosphate + ADP. In terms of biological role, major role in the synthesis of nucleoside triphosphates other than ATP. The ATP gamma phosphate is transferred to the NDP beta phosphate via a ping-pong mechanism, using a phosphorylated active-site intermediate. This is Nucleoside diphosphate kinase from Methanoregula boonei (strain DSM 21154 / JCM 14090 / 6A8).